Consider the following 589-residue polypeptide: Protein PAF1 homolog (589 aa).

Pro residues predominate over residues 1–54 (MASYRPPYPPLPQPPSQNSLAPPPPPPSLPPPVPPPPPSHQPYSYPPPPPPPPH). Disordered stretches follow at residues 1–180 (MASY…PLLT) and 542–589 (GVYS…DYSE). Low complexity predominate over residues 55 to 65 (AYYQQGPHYPQ). The span at 71–87 (APPPPPPPSAPPPLVPD) shows a compositional bias: pro residues. Basic and acidic residues predominate over residues 88 to 116 (PPRHQGPNDHEKGASKQVGRRERAKPDPS). Over residues 117–127 (KHHHRSHLPHS) the composition is skewed to basic residues. Residues 126 to 159 (HSKKIETEEERRLRKKRELEKQRQDEKHRQQMKN) adopt a coiled-coil conformation. Over residues 128–154 (KKIETEEERRLRKKRELEKQRQDEKHR) the composition is skewed to basic and acidic residues.

This sequence belongs to the PAF1 family. Component of the nuclear PAF1 complex (PAF1C), which consists of VIP2/ELF7/PAF1, VIP3/SKI8/WDR61, VIP4/LEO1, VIP5/RTF1, VIP6/ELF8/CTR9 and CDC73. As to expression, expressed in roots, leaves and shoot apex.

The protein localises to the nucleus. Functionally, component of the PAF1 complex (PAF1C) which is involved in histone modifications such as methylation on histone H3 'Lys-4' (H3K4me3). Involved in regulation of flowering time. Required for the expression of the flowering repressors and MAD-box genes FLC, AGL27/FLM and AGL31/MAF2. Required for histone H3 trimethylation on 'Lys-4' H3K4me3 at the FLC and AGL27/FLM loci. Involved in the control of seed dormancy and germination. The sequence is that of Protein PAF1 homolog from Arabidopsis thaliana (Mouse-ear cress).